A 110-amino-acid chain; its full sequence is Neural hemoglobin (110 aa).

Positions 2–110 (VNWAAVVDDF…HAIDDILSHL (109 aa)) constitute a Globin domain. Heme is bound at residue H70.

Belongs to the globin family. Homotetramer. Self-associates in the deoxy state. Seems to dissociate upon oxygenation.

Acts as an oxygen store capable of sustaining neuronal activity in an anoxic environment for 5 to 30 minutes. This Cerebratulus lacteus (Milky ribbon worm) protein is Neural hemoglobin.